The sequence spans 431 residues: Glutamate--tRNA ligase 1 (431 aa).

Positions 11–21 match the 'HIGH' region motif; the sequence is PSPTGDLHLGG. A 'KMSKS' region motif is present at residues 203-207; it reads KLSKR. Lys-206 is a binding site for ATP.

It belongs to the class-I aminoacyl-tRNA synthetase family. Glutamate--tRNA ligase type 1 subfamily. Monomer.

It is found in the cytoplasm. The enzyme catalyses tRNA(Glu) + L-glutamate + ATP = L-glutamyl-tRNA(Glu) + AMP + diphosphate. In terms of biological role, catalyzes the attachment of glutamate to tRNA(Glu) in a two-step reaction: glutamate is first activated by ATP to form Glu-AMP and then transferred to the acceptor end of tRNA(Glu). The chain is Glutamate--tRNA ligase 1 from Rubrobacter xylanophilus (strain DSM 9941 / JCM 11954 / NBRC 16129 / PRD-1).